The following is a 122-amino-acid chain: Large ribosomal subunit protein bL12 (122 aa).

This sequence belongs to the bacterial ribosomal protein bL12 family. As to quaternary structure, homodimer. Part of the ribosomal stalk of the 50S ribosomal subunit. Forms a multimeric L10(L12)X complex, where L10 forms an elongated spine to which 2 to 4 L12 dimers bind in a sequential fashion. Binds GTP-bound translation factors.

In terms of biological role, forms part of the ribosomal stalk which helps the ribosome interact with GTP-bound translation factors. Is thus essential for accurate translation. This is Large ribosomal subunit protein bL12 from Acinetobacter baumannii (strain AB0057).